The following is a 239-amino-acid chain: Tetratricopeptide repeat protein 9B (239 aa).

The disordered stretch occupies residues 1 to 54; that stretch reads MQRGALSPVLMLSAAPEPPPRPPPALSPPGPGSAPRHGSARSGPAPEPSGGLAA. A phosphoserine mark is found at S7 and S27. The span at 16–32 shows a compositional bias: pro residues; sequence PEPPPRPPPALSPPGPG. One copy of the TPR 1 repeat lies at 63-97; the sequence is AVAFKAEGQRCYREKKFREAIGKYHRALLQLKAAQ. The tract at residues 98–121 is disordered; the sequence is GARPGGLPTPSPGPTTSPGPARLS. A compositionally biased stretch (pro residues) spans 104-114; that stretch reads LPTPSPGPTTS. One copy of the TPR 2 repeat lies at 169–202; that stretch reads FKATYRAGIAFYHLGDYARALRYLQEARSREPTD.

This sequence belongs to the TTC9 family.

This chain is Tetratricopeptide repeat protein 9B (Ttc9b), found in Mus musculus (Mouse).